The chain runs to 198 residues: Protein hunchback (198 aa).

Disordered regions lie at residues 16 to 111 (SHHH…LPGL) and 152 to 198 (NDKL…KYMA). A compositionally biased stretch (basic residues) spans 17–31 (HHHHHHHAHHSHHQH). Composition is skewed to low complexity over residues 35-46 (SNSNSNASSPHQ) and 56-83 (SNTN…QQQQ). Residues 95–105 (PSPSNNDQNSP) show a composition bias toward polar residues. A compositionally biased stretch (basic and acidic residues) spans 179–198 (EPEKEHDLMSNSSEDMKYMA).

This sequence belongs to the hunchback C2H2-type zinc-finger protein family.

It localises to the nucleus. In terms of biological role, gap class segmentation protein that controls development of head structures. The chain is Protein hunchback (hb) from Drosophila lineosetae (Fruit fly).